A 322-amino-acid chain; its full sequence is tRNA U34 carboxymethyltransferase (322 aa).

7 residues coordinate carboxy-S-adenosyl-L-methionine: lysine 91, tryptophan 105, lysine 110, glycine 129, methionine 195, tyrosine 199, and arginine 314.

It belongs to the class I-like SAM-binding methyltransferase superfamily. CmoB family. As to quaternary structure, homotetramer.

The enzyme catalyses carboxy-S-adenosyl-L-methionine + 5-hydroxyuridine(34) in tRNA = 5-carboxymethoxyuridine(34) in tRNA + S-adenosyl-L-homocysteine + H(+). In terms of biological role, catalyzes carboxymethyl transfer from carboxy-S-adenosyl-L-methionine (Cx-SAM) to 5-hydroxyuridine (ho5U) to form 5-carboxymethoxyuridine (cmo5U) at position 34 in tRNAs. This Ectopseudomonas mendocina (strain ymp) (Pseudomonas mendocina) protein is tRNA U34 carboxymethyltransferase.